Reading from the N-terminus, the 278-residue chain is Delta(3,5)-Delta(2,4)-dienoyl-CoA isomerase, peroxisomal (278 aa).

Met-1 carries the N-acetylmethionine modification. Residues 69 to 73 and Gly-128 each bind substrate; that span reads SGIDL. The Microbody targeting signal motif lies at 276 to 278; that stretch reads AKL.

It belongs to the enoyl-CoA hydratase/isomerase family. In terms of tissue distribution, expressed in roots, leaves, stems and flowers.

Its subcellular location is the peroxisome. The catalysed reaction is a (3E,5Z)-dienoyl-CoA = a (2E,4E)-(5,6-saturated)-dienoyl-CoA. It participates in lipid metabolism; fatty acid beta-oxidation. Its function is as follows. Converts 3,5-dienoyl-CoAs to the corresponding 2,4-dienoyl-CoAs. Involved in degradation of unsaturated fatty acids. The chain is Delta(3,5)-Delta(2,4)-dienoyl-CoA isomerase, peroxisomal from Arabidopsis thaliana (Mouse-ear cress).